Here is a 338-residue protein sequence, read N- to C-terminus: Heat-inducible transcription repressor HrcA (338 aa).

Belongs to the HrcA family.

Its function is as follows. Negative regulator of class I heat shock genes (grpE-dnaK-dnaJ and groELS operons). Prevents heat-shock induction of these operons. This chain is Heat-inducible transcription repressor HrcA, found in Thermotoga sp. (strain RQ2).